A 278-amino-acid chain; its full sequence is Glycerophosphodiester phosphodiesterase GpdQ (278 aa).

7 residues coordinate Fe cation: Asp8, His10, Asp50, Asn80, His156, His195, and His197.

Belongs to the cyclic nucleotide phosphodiesterase class-III family. The cofactor is Fe(2+).

It carries out the reaction a sn-glycero-3-phosphodiester + H2O = an alcohol + sn-glycerol 3-phosphate + H(+). The enzyme catalyses sn-glycero-3-phosphoethanolamine + H2O = ethanolamine + sn-glycerol 3-phosphate + H(+). Functionally, catalyzes the hydrolysis of the 3'-5' phosphodiester bond of glycerophosphodiesters such as glycerophosphorylethanolamine (GPE), a typical phospholipid metabolite. In Enterobacter lignolyticus (strain SCF1), this protein is Glycerophosphodiester phosphodiesterase GpdQ.